A 7096-amino-acid polypeptide reads, in one-letter code: Replicase polyprotein 1ab (7096 aa).

The tract at residues 1-147 (MESLVPGFNE…ADLKSFDLGD (147 aa)) is disordered. The Cytoplasmic portion of the chain corresponds to 1-2225 (MESLVPGFNE…NYLKSPNFSK (2225 aa)). The region spanning 12 to 127 (THVQLSLPVL…YRKVLLRKNG (116 aa)) is the CoV Nsp1 globular domain. The BetaCoV Nsp1 C-terminal domain maps to 148–179 (ELGTDPYEDFQENWNTKHSSGVTRELMRELNG). The tract at residues 154–180 (YEDFQENWNTKHSSGVTRELMRELNGG) is binding to 40s ribosome mRNA entry channel. A CoV Nsp2 N-terminal domain is found at 183-456 (TRYVDNNFCG…NDNLLEILQK (274 aa)). Zn(2+)-binding residues include C200, C231, H234, H236, C323, C326, C341, C344, C370, C373, H382, and C416. The tract at residues 200–236 (CIKDLLARAGKASCTLSEQLDFIDTKRGVYCCREHEH) is C2H2. Residues 323–344 (CDHCGETSWQTGDFVKATCEFC) are C4. Positions 370 to 416 (CPACHNSEVGPEHSLAEYHNESGLKTILRKGGRTIAFGGCVFSYVGC) are C2HC. One can recognise a CoV Nsp2 middle domain in the interval 458–688 (KVNINIVGDF…FKLVNKFLAL (231 aa)). LRR repeat units lie at residues 545–569 (RSIFSRTLETAQNSVRVLQKAAITI) and 697–719 (GAKLKALNLGETFVTHSKGLYRK). A CoV Nsp2 C-terminal domain is found at 690–818 (ADSIIIGGAK…TNNTFTLKGG (129 aa)). The 109-residue stretch at 821 to 929 (TKVTFGDDTV…MYCSFYPPDE (109 aa)) folds into the Ubiquitin-like 1 domain. Residues 926–999 (PPDEDEEEGD…QQDGSEDNQT (74 aa)) are disordered. Acidic residues-rich tracts occupy residues 927–942 (PDEDEEEGDCEEEEFE) and 971–984 (PEEEQEEDWLDDDS). 3 consecutive Macro domains span residues 1025–1194 (VNSF…LEMK), 1231–1359 (KIKA…LPSI), and 1367–1494 (ILGT…TSSS). A DPUP domain is found at 1496-1561 (TPEEHFIETI…TFDNLKTLLS (66 aa)). The region spanning 1565-1620 (VRTIKVFTTVDNINLHTQVVDMSMTYGQQFGPTYLDGADVTKIKPHNSHEGKTFYV) is the Ubiquitin-like 2 domain. In terms of domain architecture, Peptidase C16 spans 1634–1898 (YYHTTDPSFL…CTEIDPKLDN (265 aa)). C1674 serves as the catalytic For PL-PRO activity. Residues 1680–1702 (LLTLQQIELKFNPPALQDAYYRA) form an LRR 3 repeat. Positions 1752, 1755, 1787, and 1789 each coordinate Zn(2+). A C4-type zinc finger spans residues 1752–1789 (CKTCGQQQTTLKGVEAVMYMGTLSYEQFKKGVQIPCTC). Active-site for PL-PRO activity residues include H1835 and D1849. In terms of domain architecture, Nucleic acid-binding spans 1911–2021 (PIDLVPNQPY…CLWSTKPVET (111 aa)). The G2M domain occupies 2046–2155 (PVSEEVVENP…LNKVVSTTTN (110 aa)). A helical transmembrane segment spans residues 2226–2246 (LINIIIWFLLLSVCLGSLIYS). The Lumenal segment spans residues 2247 to 2317 (TAALGVLMSN…QITISSFKWD (71 aa)). The 3Ecto domain occupies 2247–2317 (TAALGVLMSN…QITISSFKWD (71 aa)). 2 disulfide bridges follow: C2263–C2291 and C2282–C2288. A helical transmembrane segment spans residues 2318-2338 (LTAFGLVAEWFLAYILFTRFF). Residues 2339-2775 (YVLGLAAIMQ…VNNWLKQLIK (437 aa)) are Cytoplasmic-facing. The segment at 2395-2485 (KSYVHVVDGC…QFKRPINPTD (91 aa)) is Y1. The CoV Nsp3 Y domain maps to 2395–2763 (KSYVHVVDGC…VTTKIALKGG (369 aa)). 8 residues coordinate Zn(2+): H2399, C2404, C2409, C2412, C2445, H2448, C2452, and C2455. Residues 2399 to 2412 (HVVDGCNSSTCMMC) form a ZF1 region. The tract at residues 2445–2455 (CKLHNWNCVNC) is ZF2. The interval 2486–2580 (QSSYIVDSVT…LLDQALVSDV (95 aa)) is Y2. Residues 2486–2763 (QSSYIVDSVT…VTTKIALKGG (278 aa)) are coV-Y. The interval 2581–2662 (GDSAEVAVKM…ECLKLSHQSD (82 aa)) is Y3. The tract at residues 2663-2763 (IEVTGDSCNN…VTTKIALKGG (101 aa)) is Y4. Residues 2776–2796 (VTLVFLFVAAIFYLITPVHVM) traverse the membrane as a helical segment. Over 2797-3044 (SKHTDFSSEI…IQPIGALDIS (248 aa)) the chain is Lumenal. A helical transmembrane segment spans residues 3045–3065 (ASIVAGGIVAIVVTCLAYYFM). At 3066 to 3099 (RFRRAFGEYSHVVAFNTLLFLMSFTVLCLTPVYS) the chain is on the cytoplasmic side. Residues 3100–3120 (FLPGVYSVIYLYLTFYLTNDV) form a helical membrane-spanning segment. The Lumenal portion of the chain corresponds to 3121-3127 (SFLAHIQ). Residues 3128-3148 (WMVMFTPLVPFWITIAYIICI) form a helical membrane-spanning segment. Over 3149 to 3586 (STKHFYWFFS…KGTHHWLLLT (438 aa)) the chain is Cytoplasmic. Positions 3165 to 3263 (VVFNGVSFST…QTSITSAVLQ (99 aa)) constitute a Nsp4C domain. An LRR 4 repeat occupies 3185–3206 (LNKEMYLKLRSDVLLPLTQYNR). One can recognise a Peptidase C30 domain in the interval 3264–3569 (SGFRKMAFPS…VRQCSGVTFQ (306 aa)). A Glycyl lysine isopeptide (Lys-Gly) (interchain with G-Cter in ubiquitin) cross-link involves residue K3268. The For 3CL-PRO activity role is filled by H3304. K3353 is covalently cross-linked (Glycyl lysine isopeptide (Lys-Gly) (interchain with G-Cter in ubiquitin)). Catalysis depends on C3408, which acts as the Nucleophile; for 3CL-PRO activity. A helical transmembrane segment spans residues 3587–3607 (ILTSLLVLVQSTQWSLFFFLY). E3608 is a topological domain (lumenal). A helical transmembrane segment spans residues 3609 to 3629 (NAFLPFAMGIIAMSAFAMMFV). Residues 3630 to 3634 (KHKHA) lie on the Cytoplasmic side of the membrane. The chain crosses the membrane as a helical span at residues 3635–3655 (FLCLFLLPSLATVAYFNMVYM). At 3656–3673 (PASWVMRIMTWLDMVDTS) the chain is on the lumenal side. A helical membrane pass occupies residues 3674–3694 (LSGFKLKDCVMYASAVVLLIL). The Cytoplasmic portion of the chain corresponds to 3695–3729 (MTARTVYDDGARRVWTLMNVLTLVYKVYYGNALDQ). Residues 3730–3750 (AISMWALIISVTSNYSGVVTT) traverse the membrane as a helical segment. The Lumenal segment spans residues 3751–3778 (VMFLARGIVFMCVEYCPIFFITGNTLQC). The chain crosses the membrane as a helical span at residues 3779-3799 (IMLVYCFLGYFCTCYFGLFCL). At 3800 to 7096 (LNRYFRLTLG…VISSDVLVNN (3297 aa)) the chain is on the cytoplasmic side. Residues 3860–3942 (SKMSDVKCTS…EMLDNRATLQ (83 aa)) enclose the RdRp Nsp7 cofactor domain. A disordered region spans residues 3931 to 4020 (CEEMLDNRAT…QMYKQARSED (90 aa)). 2 LRR repeats span residues 3935–3959 (LDNRATLQAIASEFSSLPSYAAFAT) and 3977–4004 (LKKLKKSLNVAKSEFDRDAAMQRKLEKM). The RdRp Nsp8 cofactor domain occupies 3943 to 4140 (AIASEFSSLP…LRANSAVKLQ (198 aa)). Positions 4141 to 4253 (NNELSPVALR…GSLAATVRLQ (113 aa)) constitute a Nsp9 ssRNA-binding domain. An ExoN/MTase coactivator domain is found at 4254–4392 (AGNATEVPAN…CDQLREPMLQ (139 aa)). 8 residues coordinate Zn(2+): C4327, C4330, H4336, C4343, C4370, C4373, C4381, and C4383. The region spanning 4399 to 4653 (FLNRVCGVSA…TAESHVDTDL (255 aa)) is the NiRAN domain. An LRR 7 repeat occupies 4591 to 4616 (AGIVGVLTLDNQDLNGNWYDFGDFIQ). N4601 and D4610 together coordinate Mn(2+). In terms of domain architecture, Nsp12 Interface spans 4658 to 4756 (IKWDLLKYDF…HNQDVNLHSS (99 aa)). Zn(2+)-binding residues include H4687, C4693, C4698, C4702, and C4879. In terms of domain architecture, Nsp12 RNA-dependent RNA polymerase spans 4757–5324 (RLSFKELLVY…AMYTPHTVLQ (568 aa)). The segment at 4759 to 4973 (SFKELLVYAA…HQKLLKSIAA (215 aa)) is rdRp Fingers N-ter. The interval 4937–4947 (KYAISAKNRAR) is interaction with RMP Remdesivir. A rdRp Palm N-ter region spans residues 4974 to 5012 (TRGATVVIGTSKFYGGWHNMLKTVYSDVENPHLMGWDYP). Residues 5004 to 5166 (PHLMGWDYPK…CFNSTYASQG (163 aa)) enclose the RdRp catalytic domain. Positions 5013 to 5071 (KCDRAMPNMLRIMASLVLARKHTTCCSLSHRFYRLANECAQVLSEMVMCGGSLYVKPGG) are rdRp Fingers C-ter. Residues H5034, C5037, and C5038 each contribute to the Zn(2+) site. Residues 5072-5207 (TSSGDATTAY…TKGPHEFCSQ (136 aa)) are rdRp Palm C-ter. Residues S5151, D5152, and D5153 contribute to the active site. A rdRp Thumb region spans residues 5208–5324 (HTMLVKQGDD…AMYTPHTVLQ (117 aa)). The region spanning 5325–5437 (AVGACVLCNS…TDFNAIATCD (113 aa)) is the CV ZBD domain. Residues C5329, C5332, C5340, C5343, C5350, C5353, H5357, H5363, C5374, C5379, C5396, and H5399 each coordinate Zn(2+). The LRR 8 repeat unit spans residues 5552-5572 (TSHTVMPLSAPTLVPQEHYVR). The (+)RNA virus helicase ATP-binding domain occupies 5581–5762 (NISDEFSSNV…MKTIGPDMFL (182 aa)). 5606–5613 (GPPGTGKS) contacts a ribonucleoside 5'-triphosphate. The region spanning 5763 to 5932 (GTCRRCPAEI…TLQAENVTGL (170 aa)) is the (+)RNA virus helicase C-terminal domain. The region spanning 5997–6212 (MFITREEAIR…RCLAVHECFV (216 aa)) is the ExoN domain. Residues D6015, E6017, and E6116 contribute to the active site. 3 residues coordinate Mg(2+): D6015, E6017, and E6116. The Zn(2+) site is built by C6132, C6135, C6151, H6154, H6182, C6186, and H6189. Active-site residues include H6193 and D6198. H6193 and D6198 together coordinate Mg(2+). Zn(2+) is bound at residue C6204. The N7-MTase domain occupies 6221–6452 (YPIIGDELKI…NLWNTFTRLQ (232 aa)). Position 6256–6262 (6256–6262 (DIGNPKA)) interacts with S-adenosyl-L-methionine. The gpppA-binding stretch occupies residues 6339 to 6353 (CDGGSLYVNKHAFHT). The Zn(2+) site is built by C6377, C6402, C6409, and H6412. Residues 6453-6513 (SLENVAFNVV…NVAFELWAKR (61 aa)) enclose the Nsp15 N-terminal oligomerization domain. The region spanning 6514–6639 (NIKPVPEVKI…YYKKVDGVVQ (126 aa)) is the AV-Nsp11N/CoV-Nsp15M domain. The NendoU domain maps to 6656–6795 (KPRSQMEIDF…KDGHVETFYP (140 aa)). Catalysis depends on H6686, which acts as the Proton donor; for uridylate-specific endoribonuclease nsp15 activity. H6701 (proton acceptor; for uridylate-specific endoribonuclease nsp15 activity) is an active-site residue. Residue K6741 is the For uridylate-specific endoribonuclease nsp15 activity of the active site. Uracil-binding positions include 6741–6745 (KCVCS) and 6792–6796 (TFYPK). The region spanning 6800–7094 (SQAWQPGVAM…RVVISSDVLV (295 aa)) is the Nidovirus-type SAM-dependent 2'-O-MTase domain. The LRR 9 repeat unit spans residues 6817 to 6841 (RMLLEKCDLQNYGDSATLPKGIMMN). Active-site residues include K6844, D6928, K6968, and E7001.

Belongs to the coronaviruses polyprotein 1ab family. Interacts with host GIGYF2. In terms of assembly, may form homohexamers. Interacts with N protein. As to quaternary structure, 3CL-PRO exists as monomer and homodimer. Only the homodimer shows catalytic activity. Interacts with host FBXO22; this interaction promotes the proteasomal degradation of nsp5. Interacts with PL-PRO and nsp6. In terms of assembly, forms homodimers. Interacts with host ZFYVE1 (DFCP1), which leads to ER and DMVs binding to lipid droplets. Interacts with host TBK1; this interaction decreases IRF3 phosphorylation by 57%, which leads to reduced IFN-beta production. As to quaternary structure, interacts with nsp8 and nsp12 to form the replication-transcription complex (RTC): nsp12, nsp7, two subunits of nsp8, and up to two subunits of nsp13. Eight copies of nsp7 and eight copies of nsp8 assemble to form a heterohexadecamer dsRNA-encircling ring structure. Interacts with nsp7, nsp13 and nsp12 to form the replication-transcription complex (RTC): nsp12, nsp7, two subunits of nsp8, and up to two subunits of nsp13. Eight copies of nsp7 and eight copies of nsp8 assemble to form a heterohexadecamer dsRNA-encircling ring structure. In terms of assembly, is a dimer. Interacts with NSP12. Interacts with host SND1. As to quaternary structure, forms a dodecamer and interacts with nsp14 and nsp16; these interactions enhance nsp14 and nsp16 enzymatic activities. Interacts with nsp7 and nsp8 to form the replication-transcription complex (RTC): nsp12, nsp7, two subunits of nsp8, and up to two subunits of nsp13. Interacts with nsp9. In terms of assembly, interacts with nsp8 to form the replication-transcription complex (RTC): nsp12, nsp7, two subunits of nsp8, and up to two subunits of nsp13. Interacts with host TBK1; this interaction inhibits TBK1 phosphorylation and decreases by 75% IRF3 phosphorylation, which leads to reduced IFN-beta production. As to quaternary structure, interacts (via N-terminus) with DDX1. Interacts with nsp10. Homohexamer. In terms of assembly, interacts with nsp10. It depends on Mn(2+) as a cofactor. Requires Mg(2+) as cofactor. In terms of processing, specific enzymatic cleavages in vivo by its own proteases yield mature proteins. 3CL-PRO and PL-PRO proteinases are autocatalytically processed.

The protein localises to the host cytoplasm. It is found in the host endosome. Its subcellular location is the host endoplasmic reticulum membrane. The protein resides in the host Golgi apparatus. It localises to the host nucleus. The protein localises to the host perinuclear region. It is found in the host endoplasmic reticulum. Its subcellular location is the host endoplasmic reticulum-Golgi intermediate compartment. The enzyme catalyses RNA(n) + a ribonucleoside 5'-triphosphate = RNA(n+1) + diphosphate. It carries out the reaction ATP + H2O = ADP + phosphate + H(+). The catalysed reaction is TSAVLQ-|-SGFRK-NH2 and SGVTFQ-|-GKFKK the two peptides corresponding to the two self-cleavage sites of the SARS 3C-like proteinase are the two most reactive peptide substrates. The enzyme exhibits a strong preference for substrates containing Gln at P1 position and Leu at P2 position.. It catalyses the reaction Thiol-dependent hydrolysis of ester, thioester, amide, peptide and isopeptide bonds formed by the C-terminal Gly of ubiquitin (a 76-residue protein attached to proteins as an intracellular targeting signal).. The enzyme catalyses a 5'-end (N(7)-methyl 5'-triphosphoguanosine)-ribonucleoside in mRNA + S-adenosyl-L-methionine = a 5'-end (N(7)-methyl 5'-triphosphoguanosine)-(2'-O-methyl-ribonucleoside) in mRNA + S-adenosyl-L-homocysteine + H(+). It carries out the reaction uridylyl-uridylyl-ribonucleotide-RNA = a 3'-end uridylyl-2',3'-cyclophospho-uridine-RNA + a 5'-end dephospho-ribonucleoside-RNA. The catalysed reaction is a 5'-end diphospho-ribonucleoside in mRNA + GTP + H(+) = a 5'-end (5'-triphosphoguanosine)-ribonucleoside in mRNA + diphosphate. It catalyses the reaction a 5'-end (5'-triphosphoguanosine)-ribonucleoside in mRNA + S-adenosyl-L-methionine = a 5'-end (N(7)-methyl 5'-triphosphoguanosine)-ribonucleoside in mRNA + S-adenosyl-L-homocysteine. With respect to regulation, inhibited in vitro by GRL-0617. Inhibited ex vivo by K22. It may shift NSP6 zippering activity towards the nuclear envelope, thereby impairing formation of the NSP6-compartment necessary for viral transcription/replication. Its activity is regulated as follows. Inhibited by Remdesivir antiviral drug (GS-5734). With respect to regulation, inhibited by Remdesivir antiviral drug (GS-5734) through non-obligate RNA chain termination. Inhibited by pyridone-containing alpha-ketoamides compounds 13a and 13b. In turn, alpha-ketoamide 13b (tert-butyl (1-((S)-1-(((S)-4-(benzylamino)-3,4-dioxo-1-((S)-2-oxopyrrolidin-3-yl)butan-2-yl)amino)-3-cyclopropyl-1-oxopropan-2-yl)-2-oxo-1,2-dihydropyridin-3-yl)carbamate) inhibits SARS-CoV-2 replication in human lung cells. Inhibited ex vivo by michael acceptor inhibitor N3. Inhibited ex vivo by compound 11a and 11b. In terms of biological role, multifunctional protein involved in the transcription and replication of viral RNAs. Contains the proteinases responsible for the cleavages of the polyprotein. Inhibits host translation by associating with the open head conformation of the 40S subunit. The C-terminus binds to and obstructs ribosomal mRNA entry tunnel. Thereby inhibits antiviral response triggered by innate immunity or interferons. The nsp1-40S ribosome complex further induces an endonucleolytic cleavage near the 5'UTR of host mRNAs, targeting them for degradation. This inhibits the integrated stress response (ISR) in the infected cell by preventing EIF2S1/eIF2-alpha phosphorylation upstream of stress granule formation and depletes host G3BP1. Viral mRNAs less susceptible to nsp1-mediated inhibition of translation, because of their 5'-end leader sequence. Functionally, enhances mRNA repression of the 4EHP-GYF2 complex in the host, thereby inhibiting the antiviral response and facilitating SARS-CoV-2 replication. Possibly acts in cooperation with nsp1, which induces ribosome stalling on host mRNA, triggering mRNA repression by the host 4EHP-GYF2 complex which is enhanced by nsp2. Its function is as follows. Responsible for the cleavages located at the N-terminus of the replicase polyprotein. Participates together with nsp4 in the assembly of virally-induced cytoplasmic double-membrane vesicles necessary for viral replication. Antagonizes innate immune induction of type I interferon by blocking the phosphorylation, dimerization and subsequent nuclear translocation of host IRF3. Also prevents host NF-kappa-B signaling. In addition, PL-PRO possesses a deubiquitinating/deISGylating activity and processes both 'Lys-48'- and 'Lys-63'-linked polyubiquitin chains from cellular substrates. Cleaves preferentially ISG15 from antiviral protein IFIH1 (MDA5), but not RIGI. Can play a role in host ADP-ribosylation by ADP-ribose. Plays a role in the formation and maintenance of double membrane vesicles (DMVs) replication organelles. DMVs are formed by nsp3 and nsp4, while nsp6 zippers ER membranes and connects to lipid droplets. In terms of biological role, plays a role in the formation and maintenance of double membrane vesicles (DMVs) replication organelles. DMVs are formed by nsp3 and nsp4, while nsp6 zippers ER membranes and connects to lipid droplets. Cleaves the C-terminus of replicase polyprotein at 11 sites. Recognizes substrates containing the core sequence [ILMVF]-Q-|-[SGACN]. Cleaves and inactivates human TRMT1, preventing tRNA guanine(26)-dimethylation of tRNAs. May cleave human NLRP1 in lung epithelial cells, thereby activating the NLRP1 inflammasome pathway. May cleave human GSDMD, triggering alternative GSDME-mediated epithelial cell death upon activation of the NLRP1 inflammasome, which may enhance the release interleukins 1B, 6, 16 and 18. Also able to bind an ADP-ribose-1''-phosphate (ADRP). Functionally, plays a role in the formation and maintenance of double membrane vesicles (DMVs) replication organelles. DMVs are formed by nsp3 and nsp4, while nsp6 zippers ER membranes and connects to lipid droplets. LDs are consumed during DMV formation. Binds to host TBK1 without affecting TBK1 phosphorylation; the interaction with TBK1 decreases IRF3 phosphorylation, which leads to reduced IFN-beta production. Its function is as follows. Plays a role in viral RNA synthesis. Forms a hexadecamer with nsp8 (8 subunits of each) that may participate in viral replication by acting as a primase. Alternatively, may synthesize substantially longer products than oligonucleotide primers. In terms of biological role, plays a role in viral RNA synthesis. Forms a hexadecamer with nsp7 (8 subunits of each) that may participate in viral replication by acting as a primase. Alternatively, may synthesize substantially longer products than oligonucleotide primers. Interacts with ribosome signal recognition particle RNA (SRP). Together with NSP9, suppress protein integration into the cell membrane, thereby disrupting host immune defenses. Forms a primer, NSP9-pU, which is utilized by the polymerase for the initiation of RNA chains. Interacts with ribosome signal recognition particle RNA (SRP). Together with NSP8, suppress protein integration into the cell membrane, thereby disrupting host immune defenses. Functionally, plays a pivotal role in viral transcription by stimulating both nsp14 3'-5' exoribonuclease and nsp16 2'-O-methyltransferase activities. Therefore plays an essential role in viral mRNAs cap methylation. Its function is as follows. RNA-directed RNA polymerase that catalyzes the transcription of viral genomic and subgenomic RNAs. Acts in complex with nsp7 and nsp8 to transcribe both the minus and positive strands of genomic RNA. The kinase-like NiRAN domain of NSP12 attaches one or more nucleotides to the amino terminus of NSP9, forming a covalent RNA-protein intermediate that serves as transcription/replication primer. Subgenomic RNAs (sgRNAs) are formed by discontinuous transcription: The polymerase has the ability to pause at transcription-regulating sequences (TRS) and jump to the leader TRS, resulting in a major deletion. This creates a series of subgenomic RNAs that are replicated, transcribed and translated. In addition, Nsp12 is a subunit of the viral RNA capping enzyme that catalyzes the RNA guanylyltransferase reaction for genomic and sub-genomic RNAs. Subsequently, the NiRAN domain transfers RNA to GDP, and forms the core cap structure GpppA-RNA. In terms of biological role, plays a role in viral RNA synthesis. Multi-functional protein with a zinc-binding domain in N-terminus displaying RNA and DNA duplex-unwinding activities with 5' to 3' polarity. Activity of helicase is dependent on magnesium. Binds to host TBK1 and inhibits TBK1 phosphorylation; the interaction with TBK1 decreases IRF3 phosphorylation, which leads to reduced IFN-beta production. Plays a role in viral RNA synthesis through two distinct activities. The N7-guanine methyltransferase activity plays a role in the formation of the cap structure GpppA-RNA. The proofreading exoribonuclease reduces the sensitivity of the virus to RNA mutagens during replication. This activity acts on both ssRNA and dsRNA in a 3'-5' direction. Functionally, plays a role in viral transcription/replication and prevents the simultaneous activation of host cell dsRNA sensors, such as MDA5/IFIH1, OAS, and PKR. Acts by degrading the 5'-polyuridines generated during replication of the poly(A) region of viral genomic and subgenomic RNAs. Catalyzes a two-step reaction in which a 2'3'-cyclic phosphate (2'3'-cP) is first generated by 2'-O transesterification, which is then hydrolyzed to a 3'-phosphate (3'-P). If not degraded, poly(U) RNA would hybridize with poly(A) RNA tails and activate host dsRNA sensors. May bind genomic dsRNA in association with the replication-transcription complex (RTC), and play a role in nsp12 discontinous transcription. Its function is as follows. Methyltransferase that mediates mRNA cap 2'-O-ribose methylation to the 5'-cap structure of viral mRNAs. N7-methyl guanosine cap is a prerequisite for binding of nsp16. Therefore, it plays an essential role in cap methylation of viral mRNAs, which is essential to evade the immune system, especially when restricted by human IFIT1 and IFIT3. May disrupt host mRNA splicing in nucleus by interacting with pre-mRNA Recognition Domains of the U1 and U2 snRNAs. The chain is Replicase polyprotein 1ab (rep) from Homo sapiens (Human).